A 601-amino-acid chain; its full sequence is Phosphomethylpyrimidine synthase (601 aa).

Residues N224, M253, Y282, H318, 338–340, 379–382, and E418 each bind substrate; these read SRG and DGLR. H422 is a binding site for Zn(2+). Y445 serves as a coordination point for substrate. Position 486 (H486) interacts with Zn(2+). Residues C566, C569, and C574 each coordinate [4Fe-4S] cluster.

This sequence belongs to the ThiC family. In terms of assembly, homodimer. [4Fe-4S] cluster serves as cofactor.

It catalyses the reaction 5-amino-1-(5-phospho-beta-D-ribosyl)imidazole + S-adenosyl-L-methionine = 4-amino-2-methyl-5-(phosphooxymethyl)pyrimidine + CO + 5'-deoxyadenosine + formate + L-methionine + 3 H(+). The protein operates within cofactor biosynthesis; thiamine diphosphate biosynthesis. Its function is as follows. Catalyzes the synthesis of the hydroxymethylpyrimidine phosphate (HMP-P) moiety of thiamine from aminoimidazole ribotide (AIR) in a radical S-adenosyl-L-methionine (SAM)-dependent reaction. This chain is Phosphomethylpyrimidine synthase, found in Xylella fastidiosa (strain 9a5c).